We begin with the raw amino-acid sequence, 786 residues long: von Willebrand factor A domain-containing protein 5A (786 aa).

Residues 1–131 enclose the VIT domain; that stretch reads MVHFCGLLTL…KAAVTLKYVQ (131 aa). In terms of domain architecture, VWFA spans 281 to 462; sequence EFIFLMDRSG…KALRTLKRSL (182 aa).

In terms of tissue distribution, expressed at low level in many tissues. Not expressed in 80% of tumor cell lines tested.

Functionally, may play a role in tumorigenesis as a tumor suppressor. Altered expression of this protein and disruption of the molecular pathway it is involved in, may contribute directly to or modify tumorigenesis. The polypeptide is von Willebrand factor A domain-containing protein 5A (VWA5A) (Homo sapiens (Human)).